A 283-amino-acid chain; its full sequence is MAQTLAQTKQISQSHTFDVSQSHHKTPDDTNSHSVIYSTQNLDLWYGENHALQNINLDIYENQITAIIGPSGCGKSTYIKTLNRMVELVPTVKTAGKILYRDQDIFDQKYSKEQLRTNVGMVFQQPNPFPKSIYDNITYGPKIHGIKNKKVLDEIVEKSLRGAAIWDELKDRLHTNAYSLSGGQQQRVCIARCLAIEPEVILMDEPTSALDPISTLRVEELVQELKEKYTIIMVTHNMQQAARVSDKTAFFLNGYVNEYDDTDKIFSNPSNKKTEDYISGRFG.

Polar residues predominate over residues 1 to 20 (MAQTLAQTKQISQSHTFDVS). Positions 1–32 (MAQTLAQTKQISQSHTFDVSQSHHKTPDDTNS) are disordered. Residues 37-278 (YSTQNLDLWY…PSNKKTEDYI (242 aa)) form the ABC transporter domain. Position 69 to 76 (69 to 76 (GPSGCGKS)) interacts with ATP.

Belongs to the ABC transporter superfamily. Phosphate importer (TC 3.A.1.7) family. The complex is composed of two ATP-binding proteins (PstB), two transmembrane proteins (PstC and PstA) and a solute-binding protein (PstS).

The protein localises to the cell membrane. It catalyses the reaction phosphate(out) + ATP + H2O = ADP + 2 phosphate(in) + H(+). Its function is as follows. Part of the ABC transporter complex PstSACB involved in phosphate import. Responsible for energy coupling to the transport system. This Staphylococcus aureus (strain MRSA252) protein is Phosphate import ATP-binding protein PstB.